The primary structure comprises 502 residues: N-fatty-acyl-amino acid synthase/hydrolase PM20D1 (502 aa).

The N-terminal stretch at 1 to 25 (MAQRCVCVLALVAMLLLVFPTVSRS) is a signal peptide. His125 provides a ligand contact to Zn(2+). Asp127 is a catalytic residue. Asp157 contributes to the Zn(2+) binding site. Catalysis depends on Glu191, which acts as the Proton acceptor. Zn(2+) is bound by residues Glu192 and Asp217. Asn252 carries N-linked (GlcNAc...) asparagine glycosylation. His464 contacts Zn(2+).

It belongs to the peptidase M20A family. The cofactor is Zn(2+).

The protein resides in the secreted. It catalyses the reaction an N-acyl-L-amino acid + H2O = an L-alpha-amino acid + a carboxylate. The catalysed reaction is an N-acyl-aromatic L-alpha-amino acid + H2O = an aromatic L-alpha-amino acid + a carboxylate. It carries out the reaction L-phenylalanine + (9Z)-octadecenoate = N-(9Z-octadecenoyl)-L-phenylalanine + H2O. The enzyme catalyses N-(9Z-octadecenoyl)-L-leucine + H2O = L-leucine + (9Z)-octadecenoate. It catalyses the reaction N-(5Z,8Z,11Z,14Z)-eicosatetraenoyl-glycine + H2O = (5Z,8Z,11Z,14Z)-eicosatetraenoate + glycine. The catalysed reaction is N-hexadecanoyl-L-phenylalanine + H2O = hexadecanoate + L-phenylalanine. It carries out the reaction N-octadecanoyl-L-phenylalanine + H2O = octadecanoate + L-phenylalanine. The enzyme catalyses N-(4Z,7Z,10Z,13Z,16Z,19Z-docosahexaenoyl)-L-phenylalanine + H2O = (4Z,7Z,10Z,13Z,16Z,19Z)-docosahexaenoate + L-phenylalanine. It catalyses the reaction N-(9Z-octadecenoyl)-L-asparagine + H2O = L-asparagine + (9Z)-octadecenoate. The catalysed reaction is (9Z)-octadecenoate + glycine = N-(9Z-octadecenoyl)glycine + H2O. It carries out the reaction N-(9Z-octadecenoyl)-L-lysine + H2O = L-lysine + (9Z)-octadecenoate. The enzyme catalyses N-(9Z-octadecenoyl)-L-methionine + H2O = (9Z)-octadecenoate + L-methionine. It catalyses the reaction N-(9Z-octadecenoyl)-L-serine + H2O = L-serine + (9Z)-octadecenoate. The catalysed reaction is N-(9Z-octadecenoyl)-L-tryptophan + H2O = L-tryptophan + (9Z)-octadecenoate. It carries out the reaction N-(9Z-octadecenoyl)-L-tyrosine + H2O = L-tyrosine + (9Z)-octadecenoate. The enzyme catalyses N-(9Z-octadecenoyl)-L-glutamine + H2O = L-glutamine + (9Z)-octadecenoate. It catalyses the reaction N-(5Z,8Z,11Z,14Z-eicosatetraenoyl)-L-serine + H2O = (5Z,8Z,11Z,14Z)-eicosatetraenoate + L-serine. The catalysed reaction is (5Z,8Z,11Z,14Z)-eicosatetraenoate + L-phenylalanine = N-(5Z,8Z,11Z,14Z-eicosatetraenoyl)-L-phenylalanine + H2O. It participates in amino-acid metabolism. Its pathway is energy metabolism. The protein operates within lipid metabolism; fatty acid metabolism. With respect to regulation, lipoproteins are powerful coactivators of PM20D1 activity in vitro and NAA biosynthesis in vivo. Secreted enzyme that regulates the endogenous N-fatty acyl amino acid (NAAs) tissue and circulating levels by functioning as a bidirectional NAA synthase/hydrolase. It condenses free fatty acids and free amino acids to generate NAAs and bidirectionally catalyzes the reverse hydrolysis reaction. Some of these NAAs stimulate oxidative metabolism via mitochondrial uncoupling, increasing energy expenditure in a UPC1-independent manner. Thereby, this secreted protein may indirectly regulate whole body energy expenditure. PM20D1 circulates in tight association with both low- and high-density (LDL and HDL,respectively) lipoprotein particles. This chain is N-fatty-acyl-amino acid synthase/hydrolase PM20D1, found in Homo sapiens (Human).